We begin with the raw amino-acid sequence, 751 residues long: Catalase-peroxidase 1 (751 aa).

Residues 1-11 (MTDKQHTRSVS) are compositionally biased toward basic and acidic residues. A disordered region spans residues 1–31 (MTDKQHTRSVSESENPAIPSPTPKVSRPRRN). The segment at residues 103–225 (WHAAGTYRIA…LANVQMGLIY (123 aa)) is a cross-link (tryptophyl-tyrosyl-methioninium (Trp-Tyr) (with M-251)). Residue H104 is the Proton acceptor of the active site. Residues 225–251 (YVNPEGPGGNPDPLAAARDIRETFARM) constitute a cross-link (tryptophyl-tyrosyl-methioninium (Tyr-Met) (with W-103)). H266 contacts heme b. Positions 345-375 (AGAKQWKPKNPEANDTVPDAHGASRRHSPTM) are disordered.

This sequence belongs to the peroxidase family. Peroxidase/catalase subfamily. In terms of assembly, homodimer or homotetramer. The cofactor is heme b. Formation of the three residue Trp-Tyr-Met cross-link is important for the catalase, but not the peroxidase activity of the enzyme.

It carries out the reaction H2O2 + AH2 = A + 2 H2O. The catalysed reaction is 2 H2O2 = O2 + 2 H2O. In terms of biological role, bifunctional enzyme with both catalase and broad-spectrum peroxidase activity. This is Catalase-peroxidase 1 from Cupriavidus pinatubonensis (strain JMP 134 / LMG 1197) (Cupriavidus necator (strain JMP 134)).